Reading from the N-terminus, the 352-residue chain is Protein RecA (352 aa).

ATP is bound at residue 67–74; the sequence is GPESSGKT.

It belongs to the RecA family.

The protein localises to the cytoplasm. Its function is as follows. Can catalyze the hydrolysis of ATP in the presence of single-stranded DNA, the ATP-dependent uptake of single-stranded DNA by duplex DNA, and the ATP-dependent hybridization of homologous single-stranded DNAs. It interacts with LexA causing its activation and leading to its autocatalytic cleavage. The sequence is that of Protein RecA from Enterobacter sp. (strain 638).